A 474-amino-acid chain; its full sequence is PRAME family member 2 (474 aa).

An LRR 1; degenerate repeat occupies 97 to 124 (RWKLQVLDLRDVDENFWARWPGAWALSC). Residues 179–203 (HLCCSKLVNYLTPIKYLRKSLKIIY) form an LRR 2; degenerate repeat. The LRR 3; degenerate repeat unit spans residues 204-230 (INSIGELEIHNTCWPHLIRKLYCYLKE). The stretch at 231–265 (MKTLCKLVFSRCHHYTSDNELEGWLVTRFTSVFLR) is one LRR 4; degenerate repeat. LRR repeat units lie at residues 266–291 (LEHL…IRCL), 292–323 (QNPL…GYLK), 324–342 (HLNL…PLGA), 348–375 (AASL…GLSC), and 376–400 (CSQL…LLRH).

The protein belongs to the PRAME family.

This Homo sapiens (Human) protein is PRAME family member 2.